Here is a 408-residue protein sequence, read N- to C-terminus: Centromere protein U (408 aa).

Positions 1–33 (DRPRPARLSHARFSKNHSGRTHSMKDKAGRKHR) are enriched in basic residues. The interval 1 to 218 (DRPRPARLSH…GKRKKPRSYT (218 aa)) is disordered. Phosphothreonine; by PLK1 is present on Thr72. Thr92 carries the post-translational modification Phosphothreonine. Residues 94–103 (QEKEAKRSSD) are compositionally biased toward basic and acidic residues. Residue Ser102 is modified to Phosphoserine. At Thr104 the chain carries Phosphothreonine. Ser105, Ser110, and Ser114 each carry phosphoserine. A compositionally biased stretch (basic residues) spans 118–127 (SAKKPRRKLK). Phosphoserine occurs at positions 130, 133, and 135. Residues 176–186 (PQKTGPQSAES) show a composition bias toward polar residues. Lys178 participates in a covalent cross-link: Glycyl lysine isopeptide (Lys-Gly) (interchain with G-Cter in SUMO2). Phosphoserine is present on residues Ser183 and Ser187. Residue Thr192 is modified to Phosphothreonine. Ser222 is subject to Phosphoserine. Positions 273-350 (SNLKEELIKM…LRKAAYFLSN (78 aa)) form a coiled coil. The Nuclear localization signal motif lies at 293-310 (KRKNAKIISNIEKKRQRL).

It belongs to the CENP-U/AME1 family. As to quaternary structure, component of the CENPA-NAC complex, at least composed of CENPA, CENPC, CENPH, CENPM, CENPN, CENPT and CENPU. The CENPA-NAC complex interacts with the CENPA-CAD complex, composed of CENPI, CENPK, CENPL, CENPO, CENPP, CENPQ, CENPR and CENPS. Interacts with MLF1. In terms of processing, phosphorylated by PLK1 at Thr-72, creating a self-tethering site that specifically interacts with the polo-box domain of PLK1.

Its subcellular location is the cytoplasm. The protein resides in the nucleus. It localises to the chromosome. It is found in the centromere. The protein localises to the kinetochore. In terms of biological role, component of the CENPA-NAC (nucleosome-associated) complex, a complex that plays a central role in assembly of kinetochore proteins, mitotic progression and chromosome segregation. The CENPA-NAC complex recruits the CENPA-CAD (nucleosome distal) complex and may be involved in incorporation of newly synthesized CENPA into centromeres. Plays an important role in the correct PLK1 localization to the mitotic kinetochores. A scaffold protein responsible for the initial recruitment and maintenance of the kinetochore PLK1 population until its degradation. Involved in transcriptional repression. This is Centromere protein U (CENPU) from Bos taurus (Bovine).